The primary structure comprises 281 residues: Ribosomal RNA small subunit methyltransferase A (281 aa).

S-adenosyl-L-methionine is bound by residues N36, L38, G63, E84, D109, and N127.

This sequence belongs to the class I-like SAM-binding methyltransferase superfamily. rRNA adenine N(6)-methyltransferase family. RsmA subfamily.

It localises to the cytoplasm. It catalyses the reaction adenosine(1518)/adenosine(1519) in 16S rRNA + 4 S-adenosyl-L-methionine = N(6)-dimethyladenosine(1518)/N(6)-dimethyladenosine(1519) in 16S rRNA + 4 S-adenosyl-L-homocysteine + 4 H(+). Its function is as follows. Specifically dimethylates two adjacent adenosines (A1518 and A1519) in the loop of a conserved hairpin near the 3'-end of 16S rRNA in the 30S particle. May play a critical role in biogenesis of 30S subunits. This chain is Ribosomal RNA small subunit methyltransferase A, found in Borrelia garinii subsp. bavariensis (strain ATCC BAA-2496 / DSM 23469 / PBi) (Borreliella bavariensis).